A 303-amino-acid chain; its full sequence is Ferrochelatase (303 aa).

2 residues coordinate Fe cation: histidine 185 and glutamate 262.

This sequence belongs to the ferrochelatase family.

It localises to the cytoplasm. The catalysed reaction is heme b + 2 H(+) = protoporphyrin IX + Fe(2+). It functions in the pathway porphyrin-containing compound metabolism; protoheme biosynthesis; protoheme from protoporphyrin-IX: step 1/1. Its function is as follows. Catalyzes the ferrous insertion into protoporphyrin IX. The polypeptide is Ferrochelatase (Campylobacter jejuni (strain RM1221)).